The following is a 56-amino-acid chain: Sperm protamine P1 (56 aa).

The disordered stretch occupies residues 1–56; that stretch reads RLSRRRVYSIGGRRRRRRRRSRGRRGRRRGRRRGRRRGRRRGRRRRRRRGGRRRRR.

In terms of processing, P2 is phosphorylated in immature sperm. It is dephosphorylated in mature sperm allowing a stronger interaction with DNA. Testis.

It is found in the nucleus. The protein localises to the chromosome. Protamines substitute for histones in the chromatin of sperm during the haploid phase of spermatogenesis. They compact sperm DNA into a highly condensed, stable and inactive complex. Its function is as follows. Octopus spermiogenesis is characterized by a double nuclear protein transition: Histones are first replaced by P1, which allows the chromatin to adopt a shape that is not as relaxed as with histones. The majority of P1 is later replaced by P2, forming a compact chromatin. P2 is the main protamine of sperm. This Octopus vulgaris (Common octopus) protein is Sperm protamine P1.